The sequence spans 263 residues: Aquaporin Lacbi1:247946 (263 aa).

The Cytoplasmic segment spans residues 1 to 18 (MKLTISHHKCAIRKVMAE). Residues 19–39 (FVGVALLVIFGAGTACQVVLS) form a helical membrane-spanning segment. The Extracellular portion of the chain corresponds to 40–45 (TNPSSF). Residues 46–66 (LSINFGWAIGIATGAWVSAGI) form a helical membrane-spanning segment. Residues 67–89 (SGGHINPAITIAMATYRGFPWRE) are Cytoplasmic-facing. Positions 72–74 (NPA) match the NPA 1 motif. The chain crosses the membrane as a helical span at residues 90–110 (VPGYIFAQALGGFVGAALVYA). The Extracellular portion of the chain corresponds to 111-143 (NYFHAIDIFEGGHIRTQATASLFATFALPYMTQ). The chain crosses the membrane as a helical span at residues 144–164 (ASCFFSEFLATAVLFIVFLAL). The Cytoplasmic portion of the chain corresponds to 165–169 (NDKHN). The helical transmembrane segment at 170 to 190 (GALTNGLLPFALFILFIGLGA) threads the bilayer. Residues 191–227 (SLGMQTGYAVNPARDFGPRLFLAMAGYGKAVFNYRRQ) are Extracellular-facing. An NPA 2 motif is present at residues 201–203 (NPA). A helical transmembrane segment spans residues 228–248 (YWIWAPIIAPILGAQAGGLLY). Topologically, residues 249-263 (DTSIYNGDDSPIKWR) are cytoplasmic.

Belongs to the MIP/aquaporin (TC 1.A.8) family.

The protein resides in the membrane. The catalysed reaction is H2O(in) = H2O(out). In terms of biological role, water channel required to facilitate the transport of water across membranes. Shows low but significant water conductivity, but no glycerol nor ammonium transport activities. The protein is Aquaporin Lacbi1:247946 of Laccaria bicolor (strain S238N-H82 / ATCC MYA-4686) (Bicoloured deceiver).